Reading from the N-terminus, the 643-residue chain is Long-chain fatty acid transport protein 4 (643 aa).

The next 2 helical transmembrane spans lie at 20 to 42 (LPWT…WRFI) and 139 to 156 (FVGL…AALI). An AMP-binding site is contributed by 243–254 (YIYTSGTTGLPK).

The protein belongs to the ATP-dependent AMP-binding enzyme family.

Its subcellular location is the endoplasmic reticulum membrane. The enzyme catalyses a fatty acid(in) = a fatty acid(out). It catalyses the reaction (9Z,12Z)-octadecadienoate(out) = (9Z,12Z)-octadecadienoate(in). The catalysed reaction is (9Z)-octadecenoate(out) = (9Z)-octadecenoate(in). It carries out the reaction hexadecanoate(out) = hexadecanoate(in). The enzyme catalyses a long-chain fatty acid + ATP + CoA = a long-chain fatty acyl-CoA + AMP + diphosphate. It catalyses the reaction (5Z,8Z,11Z,14Z)-eicosatetraenoate + ATP + CoA = (5Z,8Z,11Z,14Z)-eicosatetraenoyl-CoA + AMP + diphosphate. The catalysed reaction is (9Z)-octadecenoate + ATP + CoA = (9Z)-octadecenoyl-CoA + AMP + diphosphate. It carries out the reaction hexadecanoate + ATP + CoA = hexadecanoyl-CoA + AMP + diphosphate. The enzyme catalyses (E)-hexadec-2-enoate + ATP + CoA = (2E)-hexadecenoyl-CoA + AMP + diphosphate. It catalyses the reaction a very long-chain fatty acid + ATP + CoA = a very long-chain fatty acyl-CoA + AMP + diphosphate. The catalysed reaction is tetracosanoate + ATP + CoA = tetracosanoyl-CoA + AMP + diphosphate. Its function is as follows. Mediates the import of long-chain fatty acids (LCFA) into the cell by facilitating their transport across cell membranes. Appears to be the principal fatty acid transporter in small intestinal enterocytes. Also functions as an acyl-CoA ligase catalyzing the ATP-dependent formation of fatty acyl-CoA using LCFA and very-long-chain fatty acids (VLCFA) as substrates, which prevents fatty acid efflux from cells and might drive more fatty acid uptake. Plays a role in the formation of the epidermal barrier. Required for fat absorption in early embryogenesis. Probably involved in fatty acid transport across the blood barrier. Indirectly inhibits RPE65 via substrate competition and via production of VLCFA derivatives like lignoceroyl-CoA. Prevents light-induced degeneration of rods and cones. This is Long-chain fatty acid transport protein 4 (SLC27A4) from Pongo abelii (Sumatran orangutan).